The chain runs to 298 residues: Tyrosine recombinase XerD (298 aa).

The region spanning 2–87 (KQELARIEQF…AVRRLFQYLY (86 aa)) is the Core-binding (CB) domain. The Tyr recombinase domain maps to 108–292 (RLPKDLSEAQ…ATERLRQLHQ (185 aa)). Residues Arg-148, Lys-172, His-244, Arg-247, and His-270 contribute to the active site. Tyr-279 (O-(3'-phospho-DNA)-tyrosine intermediate) is an active-site residue.

It belongs to the 'phage' integrase family. XerD subfamily. Forms a cyclic heterotetrameric complex composed of two molecules of XerC and two molecules of XerD, in which XerC interacts with XerD via its C-terminal region, XerD interacts with XerC via its C-terminal region and so on.

Its subcellular location is the cytoplasm. Its activity is regulated as follows. FtsK may regulate the catalytic switch between XerC and XerD in the heterotetrameric complex during the two steps of the recombination process. Its function is as follows. Site-specific tyrosine recombinase, which acts by catalyzing the cutting and rejoining of the recombining DNA molecules. Binds cooperatively to specific DNA consensus sequences that are separated from XerC binding sites by a short central region, forming the heterotetrameric XerC-XerD complex that recombines DNA substrates. The complex is essential to convert dimers of the bacterial chromosome into monomers to permit their segregation at cell division. It also contributes to the segregational stability of plasmids. In the complex XerD specifically exchanges the bottom DNA strands. The chain is Tyrosine recombinase XerD from Shigella flexneri.